We begin with the raw amino-acid sequence, 276 residues long: Putative pyruvate, phosphate dikinase regulatory protein 1 (276 aa).

ADP is bound at residue 150 to 157 (GLPRTSKT).

It belongs to the pyruvate, phosphate/water dikinase regulatory protein family. PDRP subfamily.

The catalysed reaction is N(tele)-phospho-L-histidyl/L-threonyl-[pyruvate, phosphate dikinase] + ADP = N(tele)-phospho-L-histidyl/O-phospho-L-threonyl-[pyruvate, phosphate dikinase] + AMP + H(+). It carries out the reaction N(tele)-phospho-L-histidyl/O-phospho-L-threonyl-[pyruvate, phosphate dikinase] + phosphate + H(+) = N(tele)-phospho-L-histidyl/L-threonyl-[pyruvate, phosphate dikinase] + diphosphate. Bifunctional serine/threonine kinase and phosphorylase involved in the regulation of the pyruvate, phosphate dikinase (PPDK) by catalyzing its phosphorylation/dephosphorylation. The sequence is that of Putative pyruvate, phosphate dikinase regulatory protein 1 from Syntrophomonas wolfei subsp. wolfei (strain DSM 2245B / Goettingen).